The chain runs to 417 residues: Serine hydroxymethyltransferase (417 aa).

(6S)-5,6,7,8-tetrahydrofolate contacts are provided by residues leucine 121 and 125–127; that span reads GHL. Lysine 229 bears the N6-(pyridoxal phosphate)lysine mark. 355–357 is a (6S)-5,6,7,8-tetrahydrofolate binding site; it reads SPF.

The protein belongs to the SHMT family. As to quaternary structure, homodimer. Pyridoxal 5'-phosphate is required as a cofactor.

The protein localises to the cytoplasm. It catalyses the reaction (6R)-5,10-methylene-5,6,7,8-tetrahydrofolate + glycine + H2O = (6S)-5,6,7,8-tetrahydrofolate + L-serine. The protein operates within one-carbon metabolism; tetrahydrofolate interconversion. Its pathway is amino-acid biosynthesis; glycine biosynthesis; glycine from L-serine: step 1/1. Catalyzes the reversible interconversion of serine and glycine with tetrahydrofolate (THF) serving as the one-carbon carrier. This reaction serves as the major source of one-carbon groups required for the biosynthesis of purines, thymidylate, methionine, and other important biomolecules. Also exhibits THF-independent aldolase activity toward beta-hydroxyamino acids, producing glycine and aldehydes, via a retro-aldol mechanism. This chain is Serine hydroxymethyltransferase, found in Shewanella baltica (strain OS155 / ATCC BAA-1091).